The sequence spans 1232 residues: uncharacterized protein (1232 aa).

It belongs to the Mg-chelatase subunit H family.

This is an uncharacterized protein from Methanocaldococcus jannaschii (strain ATCC 43067 / DSM 2661 / JAL-1 / JCM 10045 / NBRC 100440) (Methanococcus jannaschii).